The chain runs to 324 residues: R2-like ligand binding oxidase (324 aa).

Mn(2+) contacts are provided by glutamate 79, glutamate 112, and histidine 115. A cross-link (3-(O4'-tyrosyl)-valine (Val-Tyr)) is located at residues 82–173 (VTEDIQPFMK…VNQVRASVTY (92 aa)). Glutamate 112 lines the Fe cation pocket. Fe cation contacts are provided by glutamate 178, glutamate 213, and histidine 216. The interval 304 to 324 (PEALEEKFGEEDAKAMSEAAG) is disordered. A compositionally biased stretch (basic and acidic residues) spans 307–318 (LEEKFGEEDAKA).

Belongs to the ribonucleoside diphosphate reductase small chain family. R2-like ligand binding oxidase subfamily. As to quaternary structure, homodimer. Fe cation is required as a cofactor. Mn(2+) serves as cofactor.

Probable oxidase. In Rhodococcus jostii (strain RHA1), this protein is R2-like ligand binding oxidase.